The chain runs to 131 residues: Hyastatin (131 aa).

Residues M1 to A16 form the signal peptide. 3 disulfide bridges follow: C103–C117, C107–C124, and C118–C125. K130 bears the Lysine amide mark.

In terms of tissue distribution, strongly expressed in hemocytes, with weaker expression in gills and epidermis. Expressed at low levels in hepatopancreas.

It localises to the cytoplasmic granule. Its function is as follows. Antimicrobial peptide. Has strong antibacterial activity against the Gram-positive bacterium C.glutamicum (MIC=0.4 uM) and the Gram-negative bacterium E.coli (MIC=12.5 uM). Has weak antibacterial activity against the Gram-positive bacterium S.aureus (MIC&gt;50 uM) and the Gram-negative bacterium P.aeruginosa (MIC&gt;50 uM). Has antifungal activity against S.cerevisiae (MIC=12.5) and C.albicans (MIC=6.3 uM). Has weak antifungal activity against the mold B.cinerea. Presents chitin-binding activity. The polypeptide is Hyastatin (Hyas araneus (Atlantic lyre crab)).